A 736-amino-acid polypeptide reads, in one-letter code: Phosphoribosylformylglycinamidine synthase subunit PurL (736 aa).

Residue H50 is part of the active site. ATP-binding residues include Y53 and K92. E94 provides a ligand contact to Mg(2+). Residues 95–98 (SHNH) and R117 each bind substrate. The active-site Proton acceptor is H96. D118 lines the Mg(2+) pocket. Q241 contacts substrate. Mg(2+) is bound at residue D269. 313–315 (ESQ) lines the substrate pocket. D495 and G532 together coordinate ATP. N533 contributes to the Mg(2+) binding site. S535 provides a ligand contact to substrate.

Belongs to the FGAMS family. Monomer. Part of the FGAM synthase complex composed of 1 PurL, 1 PurQ and 2 PurS subunits.

Its subcellular location is the cytoplasm. It catalyses the reaction N(2)-formyl-N(1)-(5-phospho-beta-D-ribosyl)glycinamide + L-glutamine + ATP + H2O = 2-formamido-N(1)-(5-O-phospho-beta-D-ribosyl)acetamidine + L-glutamate + ADP + phosphate + H(+). Its pathway is purine metabolism; IMP biosynthesis via de novo pathway; 5-amino-1-(5-phospho-D-ribosyl)imidazole from N(2)-formyl-N(1)-(5-phospho-D-ribosyl)glycinamide: step 1/2. In terms of biological role, part of the phosphoribosylformylglycinamidine synthase complex involved in the purines biosynthetic pathway. Catalyzes the ATP-dependent conversion of formylglycinamide ribonucleotide (FGAR) and glutamine to yield formylglycinamidine ribonucleotide (FGAM) and glutamate. The FGAM synthase complex is composed of three subunits. PurQ produces an ammonia molecule by converting glutamine to glutamate. PurL transfers the ammonia molecule to FGAR to form FGAM in an ATP-dependent manner. PurS interacts with PurQ and PurL and is thought to assist in the transfer of the ammonia molecule from PurQ to PurL. The chain is Phosphoribosylformylglycinamidine synthase subunit PurL from Bartonella tribocorum (strain CIP 105476 / IBS 506).